A 512-amino-acid polypeptide reads, in one-letter code: Sucrose-6-phosphate hydrolase (512 aa).

Residues 40-43 (WMND), Gln-59, Trp-67, 102-103 (FS), 165-166 (RD), Glu-229, and Trp-311 each bind substrate. The active site involves Asp-43.

Belongs to the glycosyl hydrolase 32 family.

The protein resides in the cytoplasm. The enzyme catalyses Hydrolysis of terminal non-reducing beta-D-fructofuranoside residues in beta-D-fructofuranosides.. It participates in glycan biosynthesis; sucrose metabolism. The chain is Sucrose-6-phosphate hydrolase (sacA) from Zymomonas mobilis subsp. mobilis (strain ATCC 31821 / ZM4 / CP4).